The chain runs to 180 residues: NADH-quinone oxidoreductase subunit I (180 aa).

4Fe-4S ferredoxin-type domains follow at residues 46 to 80 (GRIV…LQKT) and 90 to 119 (EFFR…LTPD). The [4Fe-4S] cluster site is built by C60, C63, C66, C70, C99, C102, C105, and C109.

The protein belongs to the complex I 23 kDa subunit family. As to quaternary structure, NDH-1 is composed of 14 different subunits. Subunits NuoA, H, J, K, L, M, N constitute the membrane sector of the complex. [4Fe-4S] cluster is required as a cofactor.

The protein resides in the cell membrane. The enzyme catalyses a quinone + NADH + 5 H(+)(in) = a quinol + NAD(+) + 4 H(+)(out). Functionally, NDH-1 shuttles electrons from NADH, via FMN and iron-sulfur (Fe-S) centers, to quinones in the respiratory chain. The immediate electron acceptor for the enzyme in this species is believed to be ubiquinone. Couples the redox reaction to proton translocation (for every two electrons transferred, four hydrogen ions are translocated across the cytoplasmic membrane), and thus conserves the redox energy in a proton gradient. The polypeptide is NADH-quinone oxidoreductase subunit I (Baumannia cicadellinicola subsp. Homalodisca coagulata).